A 92-amino-acid polypeptide reads, in one-letter code: Evasin P675 (92 aa).

An N-terminal signal peptide occupies residues M1–A24. 3 disulfide bridges follow: C44-C63, C48-C65, and C59-C76. N47 carries an N-linked (GlcNAc...) asparagine glycan. N-linked (GlcNAc...) asparagine glycosylation is present at N70.

Its subcellular location is the secreted. Functionally, salivary chemokine-binding protein which binds to host chemokines CXCL1, CXCL2, CXCL3, CXCL4, CXCL5, CXCL6, CXCL10, CXCL11 and CXCL13. In Ixodes ricinus (Common tick), this protein is Evasin P675.